An 882-amino-acid polypeptide reads, in one-letter code: Translation initiation factor IF-2 (882 aa).

A disordered region spans residues G28–Q296. Residues S67 to V81 are compositionally biased toward polar residues. Basic and acidic residues predominate over residues V92–D209. A compositionally biased stretch (basic residues) spans G244–N258. Positions K259–A272 are enriched in basic and acidic residues. The tr-type G domain occupies P381–K550. A G1 region spans residues G390–T397. G390–T397 contacts GTP. A G2 region spans residues G415 to H419. Residues D436 to G439 are G3. Residues D436–H440 and N490–D493 each bind GTP. A G4 region spans residues N490 to D493. Residues S526 to K528 form a G5 region. K800 bears the N6-acetyllysine mark.

This sequence belongs to the TRAFAC class translation factor GTPase superfamily. Classic translation factor GTPase family. IF-2 subfamily.

The protein localises to the cytoplasm. Functionally, one of the essential components for the initiation of protein synthesis. Protects formylmethionyl-tRNA from spontaneous hydrolysis and promotes its binding to the 30S ribosomal subunits. Also involved in the hydrolysis of GTP during the formation of the 70S ribosomal complex. This is Translation initiation factor IF-2 from Shigella boydii serotype 4 (strain Sb227).